Here is a 293-residue protein sequence, read N- to C-terminus: tRNA-cytidine(32) 2-sulfurtransferase (293 aa).

The PP-loop motif signature appears at 62 to 67 (SGGKDS). 3 residues coordinate [4Fe-4S] cluster: Cys-137, Cys-140, and Cys-228.

Belongs to the TtcA family. In terms of assembly, homodimer. Mg(2+) is required as a cofactor. The cofactor is [4Fe-4S] cluster.

It is found in the cytoplasm. The catalysed reaction is cytidine(32) in tRNA + S-sulfanyl-L-cysteinyl-[cysteine desulfurase] + AH2 + ATP = 2-thiocytidine(32) in tRNA + L-cysteinyl-[cysteine desulfurase] + A + AMP + diphosphate + H(+). Its pathway is tRNA modification. Its function is as follows. Catalyzes the ATP-dependent 2-thiolation of cytidine in position 32 of tRNA, to form 2-thiocytidine (s(2)C32). The sulfur atoms are provided by the cysteine/cysteine desulfurase (IscS) system. The sequence is that of tRNA-cytidine(32) 2-sulfurtransferase from Brucella suis (strain ATCC 23445 / NCTC 10510).